The chain runs to 348 residues: Protein RecA (348 aa).

65–72 (GPESSGKT) contributes to the ATP binding site.

This sequence belongs to the RecA family.

It localises to the cytoplasm. Functionally, can catalyze the hydrolysis of ATP in the presence of single-stranded DNA, the ATP-dependent uptake of single-stranded DNA by duplex DNA, and the ATP-dependent hybridization of homologous single-stranded DNAs. It interacts with LexA causing its activation and leading to its autocatalytic cleavage. This chain is Protein RecA, found in Vibrio natriegens.